We begin with the raw amino-acid sequence, 734 residues long: Oligopeptide transporter 2 (734 aa).

Helical transmembrane passes span 44–64, 68–88, 125–145, 152–172, 211–231, 252–272, 283–303, 359–379, 414–434, 442–462, 525–545, 596–616, 644–664, and 677–697; these read MWFLGLLSCILLSFLNTFFGY, PLMITMISVQVVTLPLGKLMA, GAGFGSGTAYAVGIVDIIMAF, FLASWILVITTQILGYGWAGI, FFVIAFVCSFAWYIFPAYLFL, LGSGMSGLGIGAFALDWSVIA, FFAIVNVLVGYVLVMYMVIPI, FFAISYGIGFAAIVSTLTHVA, WWFYSLLAISLVLSLVLCIFM, WWGLLLASFMALTFTVPVSII, MFLVQFIGTVIAGTVNISVAW, YPALNWFFLGGLIGPVLVWLL, ATSVNFNCWIIVGVIFNYFVF, and VLSAALDAGLAFMGVLLYFSL.

The protein belongs to the oligopeptide OPT transporter (TC 2.A.67.1) family. As to expression, expressed in flowers, leaves, roots, and stems.

The protein localises to the membrane. Functionally, involved in the translocation of tetra- and pentapeptides across the cellular membrane in an energy-dependent manner. The sequence is that of Oligopeptide transporter 2 (OPT2) from Arabidopsis thaliana (Mouse-ear cress).